Reading from the N-terminus, the 105-residue chain is ATPase inhibitor A, mitochondrial (105 aa).

The interval 17-52 (MSSDQLGELGTGAGKGGGGGGSVRAAGGSFGRREAA) is disordered. The interval 22 to 51 (LGELGTGAGKGGGGGGSVRAAGGSFGRREA) is N-terminal inhibitory region. A compositionally biased stretch (gly residues) spans 25 to 38 (LGTGAGKGGGGGGS). A coiled-coil region spans residues 58–105 (FRQKEREQLAALKNHHEEEIDHHKKEIERLQREIDRHKGKIRKLKHDD). The segment at 73–105 (HEEEIDHHKKEIERLQREIDRHKGKIRKLKHDD) is antiparallel alpha-helical coiled coil region.

The protein belongs to the ATPase inhibitor family. Homodimer; represents the active form and is present at a pH value below 6.5. Homotetramer; represents the inactive form and is present at a pH value above 7.0.

The protein localises to the mitochondrion. Endogenous F(1)F(o)-ATPase inhibitor limiting ATP depletion when the mitochondrial membrane potential falls below a threshold and the F(1)F(o)-ATP synthase starts hydrolyzing ATP to pump protons out of the mitochondrial matrix. Required to avoid the consumption of cellular ATP when the F(1)F(o)-ATP synthase enzyme acts as an ATP hydrolase. Indirectly acts as a regulator of heme synthesis in erythroid tissues: regulates heme synthesis by modulating the mitochondrial pH and redox potential, allowing fech to efficiently catalyze the incorporation of iron into protoporphyrin IX to produce heme. This is ATPase inhibitor A, mitochondrial from Danio rerio (Zebrafish).